The chain runs to 317 residues: U5 small nuclear ribonucleoprotein TSSC4 (317 aa).

The segment covering 1 to 19 (MAETEAGLEADEPTEDDTL) has biased composition (acidic residues). The disordered stretch occupies residues 1–74 (MAETEAGLEA…PPTGTLTTAV (74 aa)). Residues 20–37 (PSDTVSLSDSDSDLSLPS) show a composition bias toward low complexity. Phosphoserine is present on residues S57, S64, S83, and S92. The segment at 74 to 101 (VQPFHLRGMSSTFSQRSHSIFDCLESAA) is hom2; mediates interaction with the U5 snRNP complexes and required for spliceosomal tri-snRNP complex assembly. Residues 101 to 152 (ARQAPCSAPQTSVSDNGSFRRPVTPPSQTPARGLSRVHGNTGPTRVLPVPDY) are disordered. Over residues 108–117 (APQTSVSDNG) the composition is skewed to polar residues. Residue T124 is modified to Phosphothreonine. Positions 146–300 (VLPVPDYVSH…SKKRSRDHFR (155 aa)) are interaction with SNRNP200. Positions 147-183 (LPVPDYVSHPERWTKYSLEDVSEASEQSNRDAALAFL) are hom3; mediates interaction with the U5 snRNP complexes. The interval 198-238 (FNQDPSSCGEGRVVFTKPVRDSEARAERKRVLKKGVGSGAG) is hom4; necessary for interaction with the PRPF19 complex and required for spliceosomal tri-snRNP complex assembly. K214 is subject to N6-acetyllysine. The interval 216 to 317 (VRDSEARAER…GPGSERGPSV (102 aa)) is disordered. A compositionally biased stretch (low complexity) spans 240-250 (EAAVELAHLAG).

The protein belongs to the TSSC4 family. Interacts in a RNA-independent manner with distinct U5 snRNP-containing complexes, the mono-U5 snRNP and the post-splicing U5 snRNP-PRPF19 complex. Interacts with SNRNP200; the interaction is direct, excludes recruitment of C9ORF78 and WBP4 to SNRNP200 and negatively regulates its RNA helicase activity. Interacts with PRPF8; the interaction is direct. Expressed in placenta. Widely expressed in embryo and newborn.

It is found in the nucleus. It localises to the cytoplasm. Its function is as follows. Protein associated with the U5 snRNP, during its maturation and its post-splicing recycling and which is required for spliceosomal tri-snRNP complex assembly in the nucleus. Has a molecular sequestering activity and transiently hinders SNRNP200 binding sites for constitutive splicing factors that intervene later during the assembly of the spliceosome and splicing. Together with its molecular sequestering activity, may also function as a molecular adapter and placeholder, coordinating the assembly of the U5 snRNP and its association with the U4/U6 di-snRNP. In Mus musculus (Mouse), this protein is U5 small nuclear ribonucleoprotein TSSC4.